The sequence spans 235 residues: Zinc transporter ZIP9 (235 aa).

Asn2 is a glycosylation site (N-linked (GlcNAc...) asparagine). 4 helical membrane passes run 11–31 (SCVP…CWWT), 75–95 (TTTL…GAAA), 104–124 (LIVF…LVSF), and 138–158 (HLLV…LGLS). A glycan (N-linked (GlcNAc...) asparagine) is linked at Asn169. A run of 2 helical transmembrane segments spans residues 172–192 (GMAM…HVLP) and 214–234 (LEVA…VGHQ).

This sequence belongs to the ZIP transporter (TC 2.A.5) family.

Its subcellular location is the golgi apparatus. The protein localises to the trans-Golgi network membrane. It is found in the cell membrane. It localises to the cytoplasm. The protein resides in the perinuclear region. Its subcellular location is the mitochondrion. The protein localises to the nucleus. The enzyme catalyses Zn(2+)(in) = Zn(2+)(out). Functionally, transports zinc ions across cell and organelle membranes into the cytoplasm and regulates intracellular zinc homeostasis. Participates in the zinc ions efflux out of the secretory compartments. Regulates intracellular zinc level, resulting in the enhancement of AKT1 and MAPK3/MAPK1 (Erk1/2) phosphorylation in response to the BCR activation. Also functions as a membrane androgen receptor that mediates, through a G protein, the non-classical androgen signaling pathway, characterized by the activation of MAPK3/MAPK1 (Erk1/2) and transcription factors CREB1 or ATF1. This pathway contributes to CLDN1 and CLDN5 expression and tight junction formation between adjacent Sertoli cells. Mediates androgen-induced vascular endothelial cell proliferation through activation of an inhibitory G protein leading to the AKT1 and MAPK3/MAPK1 (Erk1/2) activation which in turn modulate inhibition (phosphorylation) of GSK3B and CCND1 transcription. Moreover, has dual functions as a membrane-bound androgen receptor and as an androgen-dependent zinc transporter both of which are mediated through an inhibitory G protein (Gi) that mediates both MAP kinase and zinc signaling leading to the androgen-dependent apoptotic process. The protein is Zinc transporter ZIP9 of Macaca fascicularis (Crab-eating macaque).